A 205-amino-acid chain; its full sequence is Peptidyl-prolyl cis-trans isomerase B (205 aa).

An N-terminal signal peptide occupies residues 1–20; it reads MKFSGLWCWLLLFLSVNVIA. Positions 39–198 constitute a PPIase cyclophilin-type domain; it reads FFDIEHGEEK…EAVKIAKCGE (160 aa).

Belongs to the cyclophilin-type PPIase family. PPIase B subfamily.

The protein localises to the secreted. It carries out the reaction [protein]-peptidylproline (omega=180) = [protein]-peptidylproline (omega=0). With respect to regulation, cyclosporin A (CsA) inhibits CYPB. Its function is as follows. PPIases accelerate the folding of proteins. It catalyzes the cis-trans isomerization of proline imidic peptide bonds in oligopeptides. In Saccharomyces cerevisiae (strain ATCC 204508 / S288c) (Baker's yeast), this protein is Peptidyl-prolyl cis-trans isomerase B (CPR2).